The following is a 563-amino-acid chain: Probable lysosomal cobalamin transporter (563 aa).

Helical transmembrane passes span 8–28, 40–60, 95–115, 144–164, and 188–208; these read LIWF…SVFI, FVTF…MLLP, VIYY…IPFA, YTLA…FAPM, and AFTF…VFYT. The N-linked (GlcNAc...) asparagine glycan is linked to Asn228. Transmembrane regions (helical) follow at residues 314–334, 374–394, 416–436, and 506–526; these read GGFS…MTVI, IIFA…VVAV, MLLA…SVVM, and FGAL…VILV. The tract at residues 537–563 is disordered; the sequence is ERQLDEDAEEAEEESLLASTGRSGNPT. Residues 539–551 are compositionally biased toward acidic residues; that stretch reads QLDEDAEEAEEES.

Belongs to the LIMR family. LMBRD1 subfamily.

Its subcellular location is the lysosome membrane. Probable lysosomal cobalamin transporter. Required to export cobalamin from lysosomes allowing its conversion to cofactors. The polypeptide is Probable lysosomal cobalamin transporter (Neosartorya fischeri (strain ATCC 1020 / DSM 3700 / CBS 544.65 / FGSC A1164 / JCM 1740 / NRRL 181 / WB 181) (Aspergillus fischerianus)).